Reading from the N-terminus, the 161-residue chain is 18.3 kDa class I heat shock protein (161 aa).

A sHSP domain is found at 48–161 (ETAAFANARI…KPQVKAINVY (114 aa)).

The protein belongs to the small heat shock protein (HSP20) family. As to quaternary structure, forms oligomeric structures.

It is found in the cytoplasm. The polypeptide is 18.3 kDa class I heat shock protein (HSP18) (Oxybasis rubra (Red goosefoot)).